A 142-amino-acid chain; its full sequence is MALERTFSIIKPNAVANNDIGAIYARFERAGFKIIAAKMLHLTKEQAEGFYAEHKGRPFFDGLVEFMTSGPIMVQVLEGENAVQRHRDIMGATNPDNALAGTLRADFSDSFTANAVHGSDAVESAQREIAYFFAADEIFPRS.

K11, F59, R87, T93, R104, and N114 together coordinate ATP. The active-site Pros-phosphohistidine intermediate is H117.

This sequence belongs to the NDK family. In terms of assembly, homotetramer. Requires Mg(2+) as cofactor.

Its subcellular location is the cytoplasm. It carries out the reaction a 2'-deoxyribonucleoside 5'-diphosphate + ATP = a 2'-deoxyribonucleoside 5'-triphosphate + ADP. It catalyses the reaction a ribonucleoside 5'-diphosphate + ATP = a ribonucleoside 5'-triphosphate + ADP. Major role in the synthesis of nucleoside triphosphates other than ATP. The ATP gamma phosphate is transferred to the NDP beta phosphate via a ping-pong mechanism, using a phosphorylated active-site intermediate. The protein is Nucleoside diphosphate kinase of Yersinia pestis bv. Antiqua (strain Antiqua).